The sequence spans 466 residues: Glutamate decarboxylase (466 aa).

K277 is subject to N6-(pyridoxal phosphate)lysine.

The protein belongs to the group II decarboxylase family. Pyridoxal 5'-phosphate serves as cofactor.

It carries out the reaction L-glutamate + H(+) = 4-aminobutanoate + CO2. Functionally, converts internalized glutamate to GABA and increases the internal pH. Involved in glutamate-dependent acid resistance. This Lactococcus lactis subsp. cremoris (strain MG1363) protein is Glutamate decarboxylase (gadB).